The following is a 150-amino-acid chain: Protein A151R (150 aa).

This sequence belongs to the asfivirus A151R family. As to quaternary structure, monomer. Homodimer. Interacts with protein B119L. Interacts with membrane protein E248R. Requires Zn(2+) as cofactor.

Its function is as follows. May participate in a redox cascade for the formation of disulfide bonds in viral proteins. The sequence is that of Protein A151R from African swine fever virus (isolate Pig/Kenya/KEN-50/1950) (ASFV).